A 175-amino-acid chain; its full sequence is Probable DNA-directed RNA polymerase subunit delta (175 aa).

In terms of domain architecture, HTH HARE-type spans 14–81; that stretch reads MALVEIAHEI…SDQTWGLRSW (68 aa). The interval 110-175 is disordered; it reads LDLDEFEEVD…YDDEEEDRKD (66 aa).

Belongs to the RpoE family. As to quaternary structure, RNAP is composed of a core of 2 alpha, a beta and a beta' subunits. The core is associated with a delta subunit and one of several sigma factors.

Functionally, participates in both the initiation and recycling phases of transcription. In the presence of the delta subunit, RNAP displays an increased specificity of transcription, a decreased affinity for nucleic acids, and an increased efficiency of RNA synthesis because of enhanced recycling. The polypeptide is Probable DNA-directed RNA polymerase subunit delta (Bacillus velezensis (strain DSM 23117 / BGSC 10A6 / LMG 26770 / FZB42) (Bacillus amyloliquefaciens subsp. plantarum)).